The chain runs to 150 residues: Transcriptional regulator MraZ (150 aa).

SpoVT-AbrB domains follow at residues 5–51 (VANL…PQPE) and 80–123 (ATEC…DEDT).

Belongs to the MraZ family. As to quaternary structure, forms oligomers.

It is found in the cytoplasm. It localises to the nucleoid. This chain is Transcriptional regulator MraZ, found in Thioalkalivibrio sulfidiphilus (strain HL-EbGR7).